A 120-amino-acid polypeptide reads, in one-letter code: NAD(P)H-quinone oxidoreductase subunit 3 (120 aa).

A run of 3 helical transmembrane segments spans residues 10 to 32 (LLGF…KVLR), 64 to 84 (MFAL…PWAV), and 89 to 109 (LGVL…VGLV).

The protein belongs to the complex I subunit 3 family. As to quaternary structure, NDH-1 can be composed of about 15 different subunits; different subcomplexes with different compositions have been identified which probably have different functions.

The protein localises to the cellular thylakoid membrane. The catalysed reaction is a plastoquinone + NADH + (n+1) H(+)(in) = a plastoquinol + NAD(+) + n H(+)(out). It catalyses the reaction a plastoquinone + NADPH + (n+1) H(+)(in) = a plastoquinol + NADP(+) + n H(+)(out). Its function is as follows. NDH-1 shuttles electrons from an unknown electron donor, via FMN and iron-sulfur (Fe-S) centers, to quinones in the respiratory and/or the photosynthetic chain. The immediate electron acceptor for the enzyme in this species is believed to be plastoquinone. Couples the redox reaction to proton translocation, and thus conserves the redox energy in a proton gradient. Cyanobacterial NDH-1 also plays a role in inorganic carbon-concentration. The polypeptide is NAD(P)H-quinone oxidoreductase subunit 3 (Acaryochloris marina (strain MBIC 11017)).